We begin with the raw amino-acid sequence, 443 residues long: MFLEEKLNLVWNKILEEVSKKISPQYYERFIDTLKLETINSEKCTIIAPSATIKTHVERKYQSIIENAILETCGDKIPVEILIETKAASPLQSILEKSFDQKDFQFNPDYTFETFIVGDCNRLAYTAAKECVRKPAEINPLYIFGSVGVGKTHLLHAIGSELTKKDPWKTVCYVDISSFMNEFRFALQSRELIESFKIKYQSYNCLIVDDIQLLSTNAEKTQDEFFALFNFLFERKRQIVIASDRPSSELAIHERLKSRFVTGVQADIQYPDREIRKGIVTHHSKIMDLGLSEDILDFLADQIEEDTRLLLGALNDIYLYKKSYSLLFLNLDKVKEIVKNRLYRKKNIEFSHDRIIEAVAKEFNLNTAEIMGKSRKKELIIPRHICFYLLHNVFNVNKSQVGRLFQTQHTTVIHGVRKTEELLSNNKEMRFLVERISSKYKLQ.

The segment at 1–80 (MFLEEKLNLV…ETCGDKIPVE (80 aa)) is domain I, interacts with DnaA modulators. Residues 80-104 (EILIETKAASPLQSILEKSFDQKDF) are domain II. The segment at 105–321 (QFNPDYTFET…GALNDIYLYK (217 aa)) is domain III, AAA+ region. Gly148, Gly150, Lys151, and Thr152 together coordinate ATP. A domain IV, binds dsDNA region spans residues 322–443 (KSYSLLFLNL…ERISSKYKLQ (122 aa)).

Belongs to the DnaA family. Oligomerizes as a right-handed, spiral filament on DNA at oriC.

It localises to the cytoplasm. Its function is as follows. Plays an essential role in the initiation and regulation of chromosomal replication. ATP-DnaA binds to the origin of replication (oriC) to initiate formation of the DNA replication initiation complex once per cell cycle. Binds the DnaA box (a 9 base pair repeat at the origin) and separates the double-stranded (ds)DNA. Forms a right-handed helical filament on oriC DNA; dsDNA binds to the exterior of the filament while single-stranded (ss)DNA is stabiized in the filament's interior. The ATP-DnaA-oriC complex binds and stabilizes one strand of the AT-rich DNA unwinding element (DUE), permitting loading of DNA polymerase. After initiation quickly degrades to an ADP-DnaA complex that is not apt for DNA replication. Binds acidic phospholipids. In Leptospira interrogans serogroup Icterohaemorrhagiae serovar copenhageni (strain Fiocruz L1-130), this protein is Chromosomal replication initiator protein DnaA.